The following is a 167-amino-acid chain: ATP synthase subunit b (167 aa).

A helical transmembrane segment spans residues 10 to 30 (TFFFQLANTLIMFLILKHFLF).

Belongs to the ATPase B chain family. F-type ATPases have 2 components, F(1) - the catalytic core - and F(0) - the membrane proton channel. F(1) has five subunits: alpha(3), beta(3), gamma(1), delta(1), epsilon(1). F(0) has three main subunits: a(1), b(2) and c(10-14). The alpha and beta chains form an alternating ring which encloses part of the gamma chain. F(1) is attached to F(0) by a central stalk formed by the gamma and epsilon chains, while a peripheral stalk is formed by the delta and b chains.

The protein resides in the cell membrane. F(1)F(0) ATP synthase produces ATP from ADP in the presence of a proton or sodium gradient. F-type ATPases consist of two structural domains, F(1) containing the extramembraneous catalytic core and F(0) containing the membrane proton channel, linked together by a central stalk and a peripheral stalk. During catalysis, ATP synthesis in the catalytic domain of F(1) is coupled via a rotary mechanism of the central stalk subunits to proton translocation. In terms of biological role, component of the F(0) channel, it forms part of the peripheral stalk, linking F(1) to F(0). In Alkaliphilus oremlandii (strain OhILAs) (Clostridium oremlandii (strain OhILAs)), this protein is ATP synthase subunit b.